We begin with the raw amino-acid sequence, 353 residues long: 3'(2'),5'-bisphosphate nucleotidase (353 aa).

The active-site Proton acceptor is the D50. Mg(2+) is bound by residues E73, D136, I138, and D139. Catalysis depends on T141, which acts as the Proton acceptor. 6 residues coordinate adenosine 3',5'-bisphosphate: T141, H232, S256, K259, R273, and D286. H232, S256, K259, R273, and D286 together coordinate AMP. Mg(2+) is bound at residue D286.

The protein belongs to the inositol monophosphatase superfamily. Mg(2+) serves as cofactor.

The enzyme catalyses 3'-phosphoadenylyl sulfate + H2O = adenosine 5'-phosphosulfate + phosphate. It catalyses the reaction adenosine 3',5'-bisphosphate + H2O = AMP + phosphate. It carries out the reaction adenosine 2',5'-bisphosphate + H2O = AMP + phosphate. The catalysed reaction is 1D-myo-inositol 1,4-bisphosphate + H2O = 1D-myo-inositol 4-phosphate + phosphate. The enzyme catalyses 1D-myo-inositol 1,3,4-trisphosphate + H2O = 1D-myo-inositol 3,4-bisphosphate + phosphate. Inhibited by Li(+) and Na(+). Phosphatase that converts adenosine 3'-phosphate 5'-phosphosulfate (PAPS) to adenosine 5'-phosphosulfate (APS) and 3'(2')-phosphoadenosine 5'-phosphate (PAP) to AMP. May regulate the flux of sulfur in the sulfur-activation pathway by converting PAPS to APS. Is also able to hydrolyze inositol 1,4-bisphosphate (Ins(1,4)P2) and inositol 1,3,4-trisphosphate (Ins(1,3,4)P3), but is not active on inositol 1,4,5-trisphosphate, inositol 1-phosphate, fructose 1,6-bisphosphate, AMP and ATP. In terms of biological role, confers resistance to lithium. The chain is 3'(2'),5'-bisphosphate nucleotidase (tol1) from Schizosaccharomyces pombe (strain 972 / ATCC 24843) (Fission yeast).